The chain runs to 1003 residues: MFVVLFCRWLNGFSQHRERLYKFEDEAVQRRRRFRVHSEESEELNDHESYSETDICTQLLASSADVTCHINVDLVNQNRFYFFVKQRNKKENSTNEEEEISSQEINTSTQNEETEVNLVFASAEDNGGVASNFDISDALMVTSNISEVSKLPETLCEEGETVQQKSVVNENDHSNEDDEQSLQSQDGSRCSDEDMNSCVSASDEEDVESQDDSFHVNDATEESIDSVSSIESQEAEESATEDLASCHSNDDKNEKDVLVDEDTSKYDNLPVEMRSAKEGEESEGTIDSSVSSSTSSSSTGDDGDDSATSYDSEDIEIQMFEYDLGTACASASISIPRPSIIPRNNKKTEVNANEERLDDLSVSPGRSDSPGGGGGGHSDSFQDPMDPGEQLGSDDEEQEDPRDYKRGGYHPVNIGDVFNARYHVIRKLGWGHFSTVWLAWDTQDKRFVAMKIVKSAEHYTEAALDEIKLLLSVRSADPNDIGCHKVVQLLDEFTVTGINGQHVAMVFEVLGCNLLKLIIRSNYRGLHLEQVRKICRQVLEALGYMHEKCGIIHTDIKPENVLITMSREEIKIMAQHAVVARKMNMKMSGSAVSTAPDHLVKMAQENMTKNKKKKMKKKAKKQREKLEAELAGLEGLKMDANGLQEAYNNAPELENFNASQVEDVTMEDTVNENGNRNKVEIRSPDRFDRTTLTPFSDPESKFGDLASPSAEYLSSPMSQLPPGGILPAPPVGPNIGDPYCDIDVKIADLGNACWVNHHYTDDIQTRQYRALEVLIGSGYGPPADIWSTACMAFELATGDYLFEPHQGDNYSRDEDHLAHISELLGAIPPSIYKKGKHWREFFHKNGHLLHIHQLKPWSLYEVLRQKYEWSHEDAQQFESFLRPMLDFDQEKRSTAKIALKHPFLLPFGGRAPKSDCPPELLSKMFPDGLIPEPFDGNEHQEVYRDENDSRSASERSANSRSAGGSDDDDEEEFNMNRPGPSGVITNNETTDISDIERFQLDLQ.

Disordered stretches follow at residues 92–112 (NSTN…TQNE), 169–309 (NEND…SATS), and 337–408 (RPSI…KRGG). Positions 202-211 (SDEEDVESQD) are enriched in acidic residues. Over residues 248–265 (SNDDKNEKDVLVDEDTSK) the composition is skewed to basic and acidic residues. Positions 285 to 300 (TIDSSVSSSTSSSSTG) are enriched in low complexity. A compositionally biased stretch (basic and acidic residues) spans 346–359 (KKTEVNANEERLDD). One can recognise a Protein kinase domain in the interval 422 to 904 (YHVIRKLGWG…AKIALKHPFL (483 aa)). Residues 428-436 (LGWGHFSTV) and Lys451 each bind ATP. Asp555 acts as the Proton acceptor in catalysis. The disordered stretch occupies residues 927 to 1003 (DGLIPEPFDG…DIERFQLDLQ (77 aa)). The segment covering 936 to 953 (GNEHQEVYRDENDSRSAS) has biased composition (basic and acidic residues). Residues 954–964 (ERSANSRSAGG) show a composition bias toward low complexity. Polar residues predominate over residues 983-992 (VITNNETTDI). A compositionally biased stretch (basic and acidic residues) spans 994 to 1003 (DIERFQLDLQ).

It belongs to the protein kinase superfamily. Ser/Thr protein kinase family. As to quaternary structure, interacts with rsp-3. Predominantly coexpressed with rsp-3 in adult hermaphrodite germlines.

It catalyses the reaction L-seryl-[protein] + ATP = O-phospho-L-seryl-[protein] + ADP + H(+). It carries out the reaction L-threonyl-[protein] + ATP = O-phospho-L-threonyl-[protein] + ADP + H(+). Required for embryogenesis and germline development in both adult hermaphrodites and males. SR-protein kinase (SRPK) that binds directly to and phosphorylates the RS domain of rsp-3/CeSF2 in vitro. In Caenorhabditis elegans, this protein is Serine/threonine-protein kinase spk-1 (spk-1).